We begin with the raw amino-acid sequence, 121 residues long: Small ribosomal subunit protein uS11 (121 aa).

The protein belongs to the universal ribosomal protein uS11 family. As to quaternary structure, part of the 30S ribosomal subunit. Interacts with proteins S7 and S18. Binds to IF-3.

In terms of biological role, located on the platform of the 30S subunit, it bridges several disparate RNA helices of the 16S rRNA. Forms part of the Shine-Dalgarno cleft in the 70S ribosome. In Mycoplasmoides gallisepticum (strain R(low / passage 15 / clone 2)) (Mycoplasma gallisepticum), this protein is Small ribosomal subunit protein uS11.